A 728-amino-acid polypeptide reads, in one-letter code: Beta-galactosidase 12 (728 aa).

Positions 1-27 (MGLNFREKAWILLGILCCSSLICSVKA) are cleaved as a signal peptide. Glutamate 185 acts as the Proton donor in catalysis. Catalysis depends on glutamate 254, which acts as the Nucleophile. 3 N-linked (GlcNAc...) asparagine glycosylation sites follow: asparagine 255, asparagine 380, and asparagine 450.

Belongs to the glycosyl hydrolase 35 family. As to expression, ubiquitous, with higher expression levels in roots and siliques.

The protein localises to the secreted. Its subcellular location is the extracellular space. The protein resides in the apoplast. The enzyme catalyses Hydrolysis of terminal non-reducing beta-D-galactose residues in beta-D-galactosides.. The protein is Beta-galactosidase 12 (BGAL12) of Arabidopsis thaliana (Mouse-ear cress).